The following is a 738-amino-acid chain: Flowering time control protein FCA (738 aa).

The tract at residues 1–118 is disordered; it reads MHRGGDRSTD…RGDHSDHDNR (118 aa). 2 stretches are compositionally biased toward gly residues: residues 52–70 and 81–98; these read RGGG…GGGR and SGGG…GEPG. The span at 109-118 shows a compositional bias: basic and acidic residues; that stretch reads RGDHSDHDNR. 2 RRM domains span residues 122 to 203 and 213 to 293; these read VKLF…YADG and HKLF…FADP. Disordered stretches follow at residues 292–451 and 566–595; these read DPKR…PAQQ and QQSN…IIPS. Residues 301 to 311 show a composition bias toward gly residues; sequence SRGGPAFGGPG. Polar residues predominate over residues 342–358; the sequence is HPSSPRSAPHQFNNFGS. Low complexity predominate over residues 368 to 377; sequence TVTSTTDTAT. The segment covering 383 to 401 has biased composition (polar residues); the sequence is FSGNGSLSSQTAVPSSSHM. Over residues 435–451 the composition is skewed to low complexity; it reads QLQNNQQGQPLQGPAQQ. Over residues 575 to 595 the composition is skewed to polar residues; that stretch reads PTQGQPVQSSNPGAPNAIIPS. One can recognise a WW domain in the interval 609–642; it reads VPLTCNWTEHTSPEGFKYYYNSITRESKWDKPEE. A disordered region spans residues 670–738; the sequence is MQQLQSPPQA…QSAQERAWKS (69 aa). Residues 683 to 706 are compositionally biased toward low complexity; it reads PAMQPVQQIPQAQQGQQQMQMKQQ. Residues 723 to 732 are compositionally biased toward polar residues; it reads RIQQGIQSAQ.

As to quaternary structure, interacts with FY. Binds to SF1, FIK, RPRD1B, OsI_31983 and MADS8.

It localises to the nucleus. In terms of biological role, plays a major role in the promotion of the transition of the vegetative meristem to reproductive development. Required for RNA-mediated chromatin silencing of a range of loci in the genome. Cotranscriptionally recognizes aberrant RNA and marks it for silencing. Controls alternative cleavage and polyadenylation on pre-mRNAs and antisense RNAs. Regulates flowering time, seed size and cell volume, probably via the modulation of cell size. This is Flowering time control protein FCA from Oryza sativa subsp. indica (Rice).